A 492-amino-acid chain; its full sequence is Heat shock factor protein 4 (492 aa).

A DNA-binding region spans residues 17-121 (VPAFLGKLWA…QLLERVRRKV (105 aa)). The segment at 129–203 (GRWRPEDLGR…GPLQTGSSGA (75 aa)) is hydrophobic repeat HR-A/B. Residues 245–323 (LPETTLGLSS…ECDFCVTAPP (79 aa)) are interactions with DUSP26, MAPK1 and MAPK2. The interval 250–286 (LGLSSSHRTRGPIISDIHEDSPSPDGTRLSPSSGGRR) is disordered. A Glycyl lysine isopeptide (Lys-Gly) (interchain with G-Cter in SUMO) cross-link involves residue Lys294. Phosphoserine is present on Ser299. The interval 337 to 378 (KGNFSPEGPRNAQQPEPRGPREVPDRGTLGLDRGARSPENLL) is disordered. Residues 365 to 390 (LGLDRGARSPENLLPPMLLRAPPESV) are hydrophobic repeat HR-C.

It belongs to the HSF family. Homotrimer. Exhibits constitutive DNA binding and forms trimers even in the absence of stress. Interacts with ALKBH4, DUSP26, MAPK1, MAPK2, MAPK8 and MAP kinase p38. In terms of processing, phosphorylated mainly on serine residues. Phosphorylation on Ser-299 promotes sumoylation on Lys-294. Post-translationally, constitutively sumoylated. Sumoylation represses the transcriptional activity and is promoted by phosphorylation on Ser-299.

The protein resides in the nucleus. Its function is as follows. Heat-shock transcription factor that specifically binds heat shock promoter elements (HSE). Required for denucleation and organelle rupture and degradation that occur during eye lens terminal differentiation, when fiber cells that compose the lens degrade all membrane-bound organelles in order to provide lens with transparency to allow the passage of light. In this process, may regulate denucleation of lens fiber cells in part by activating DNASE2B transcription. May be involved in DNA repair through the transcriptional regulation of RAD51. May up-regulate p53/TP53 protein in eye lens fiber cells, possibly through protein stabilization. In the eye lens, controls the expression of alpha-crystallin B chain/CRYAB and consequently may be involved in the regulation of lysosomal acidification. The protein is Heat shock factor protein 4 (HSF4) of Canis lupus familiaris (Dog).